The following is a 771-amino-acid chain: GPI mannosyltransferase 3 (771 aa).

The interval 1 to 47 (MSSSRRRKSFTSSSSSSSPSFHSPPPTSRLRPRSPPSSNTKTSPTST) is disordered. Low complexity-rich tracts occupy residues 10–21 (FTSSSSSSSPSF) and 36–47 (PSSNTKTSPTST). The next 7 membrane-spanning stretches (helical) occupy residues 49-69 (PLAT…AFTV), 251-271 (LSLA…WMGL), 285-305 (AILV…SCVV), 341-361 (YVSQ…LVGL), 378-398 (SLVQ…LSLV), 410-430 (LPSL…PAVI), and 441-461 (LTLI…TIYH). Residues 575–594 (SYLSAQPRPQHPSTTSTNDA) form a disordered region.

It belongs to the glycosyltransferase 22 family. PIGB subfamily.

The protein localises to the endoplasmic reticulum membrane. Its pathway is glycolipid biosynthesis; glycosylphosphatidylinositol-anchor biosynthesis. In terms of biological role, mannosyltransferase involved in glycosylphosphatidylinositol-anchor biosynthesis. Transfers the third mannose to Man2-GlcN-acyl-PI during GPI precursor assembly. The protein is GPI mannosyltransferase 3 (gpi10) of Aspergillus fumigatus (strain ATCC MYA-4609 / CBS 101355 / FGSC A1100 / Af293) (Neosartorya fumigata).